Reading from the N-terminus, the 414-residue chain is FAD-dependent monooxygenase adaC (414 aa).

Residues glutamate 32, alanine 43, arginine 115, aspartate 325, and glycine 338 each contribute to the FAD site.

It belongs to the paxM FAD-dependent monooxygenase family. Requires FAD as cofactor.

The enzyme catalyses 3-(2,4-dioxopentyl)-3,6,8,9-tetrahydroxy-1-oxo-1,2,3,4-tetrahydroanthracene-2-carboxyl-[ACP] + NADPH + O2 + H(+) = 3-(2,4-dioxopentyl)-2,3,6,8,9-pentahydroxy-1-oxo-1,2,3,4-tetrahydroanthracene-2-carboxyl-[ACP] + NADP(+) + H2O. It functions in the pathway secondary metabolite biosynthesis. Its function is as follows. FAD-dependent monooxygenase; part of the gene cluster that mediates the biosynthesis of the linear tetracyclic TAN-1612 neuropeptide Y receptor antagonist. The decaketide backbone of TAN-1612 is synthesized by the non-reducing polyketide synthase adaA via condensation of one acetyl-CoA starter unit with 9 malonyl-CoA units. The FAD-dependent monooxygenase adaC then performs hydroxylation at C2 while the polaketide chain is still attached to the NRPKS adaA. The alpha-hydroxylation step at C2 appears to be crucial for the following C18-C1 Claisen cyclization and release of the C9-hydroxyl version of TAN-1612 from the NRPKS adaA, two steps performed by the lactamase-like protein adaB. Finally, the O-methyltransferase adaD performs the C9 O-methylation to complete the biosynthesis of TAN-1612. In Aspergillus niger, this protein is FAD-dependent monooxygenase adaC.